A 417-amino-acid polypeptide reads, in one-letter code: RH-like protein (417 aa).

Helical transmembrane passes span 12–32, 44–64, 77–97, 125–145, 172–192, 203–223, 238–258, 265–285, 287–307, 331–351, and 358–378; these read CLPL…FFFT, LVAS…GLGF, VAFN…LDGF, ISMN…MELV, IHVF…KPLP, TSPS…WPTF, VFST…VSSL, INMT…GASC, VIHS…ISFG, TFGL…ALRV, and MIGF…AMSI.

It belongs to the ammonium transporter (TC 2.A.49) family. Rh subfamily.

The protein localises to the membrane. May be part of an oligomeric complex which is likely to have a transport or channel function in the erythrocyte membrane. This chain is RH-like protein, found in Macaca fascicularis (Crab-eating macaque).